A 160-amino-acid polypeptide reads, in one-letter code: Lipoprotein signal peptidase (160 aa).

2 helical membrane-spanning segments follow: residues 59 to 79 (PEGI…YVWI) and 84 to 104 (SPLF…NLID). Residues D113 and D139 contribute to the active site. Residues 132-152 (WPIFNIADACITIGACLLFFF) form a helical membrane-spanning segment.

The protein belongs to the peptidase A8 family.

The protein resides in the cell inner membrane. The enzyme catalyses Release of signal peptides from bacterial membrane prolipoproteins. Hydrolyzes -Xaa-Yaa-Zaa-|-(S,diacylglyceryl)Cys-, in which Xaa is hydrophobic (preferably Leu), and Yaa (Ala or Ser) and Zaa (Gly or Ala) have small, neutral side chains.. The protein operates within protein modification; lipoprotein biosynthesis (signal peptide cleavage). Functionally, this protein specifically catalyzes the removal of signal peptides from prolipoproteins. This chain is Lipoprotein signal peptidase, found in Chlorobaculum parvum (strain DSM 263 / NCIMB 8327) (Chlorobium vibrioforme subsp. thiosulfatophilum).